The sequence spans 80 residues: uncharacterized protein (80 aa).

This is an uncharacterized protein from Invertebrate iridescent virus 6 (IIV-6).